A 397-amino-acid polypeptide reads, in one-letter code: Riboflavin biosynthesis protein RibBA (397 aa).

Residues Met-1 to His-199 form a DHBP synthase region. Residues Arg-26–Glu-27, Asp-31, Arg-138–Thr-142, and Glu-162 each bind D-ribulose 5-phosphate. Residue Glu-27 coordinates Mg(2+). His-141 is a binding site for Mg(2+). The interval His-200–Leu-397 is GTP cyclohydrolase II. Arg-250 to Glu-254 lines the GTP pocket. Zn(2+) is bound by residues Cys-255, Cys-266, and Cys-268. GTP-binding positions include Gln-271, Glu-293–Arg-295, and Thr-315. Catalysis depends on Asp-327, which acts as the Proton acceptor; for GTP cyclohydrolase activity. Residue Arg-329 is the Nucleophile; for GTP cyclohydrolase activity of the active site. Positions 350 and 355 each coordinate GTP.

This sequence in the N-terminal section; belongs to the DHBP synthase family. It in the C-terminal section; belongs to the GTP cyclohydrolase II family. Mg(2+) is required as a cofactor. Requires Mn(2+) as cofactor. Zn(2+) serves as cofactor.

The catalysed reaction is D-ribulose 5-phosphate = (2S)-2-hydroxy-3-oxobutyl phosphate + formate + H(+). It catalyses the reaction GTP + 4 H2O = 2,5-diamino-6-hydroxy-4-(5-phosphoribosylamino)-pyrimidine + formate + 2 phosphate + 3 H(+). Its pathway is cofactor biosynthesis; riboflavin biosynthesis; 2-hydroxy-3-oxobutyl phosphate from D-ribulose 5-phosphate: step 1/1. It participates in cofactor biosynthesis; riboflavin biosynthesis; 5-amino-6-(D-ribitylamino)uracil from GTP: step 1/4. Catalyzes the conversion of D-ribulose 5-phosphate to formate and 3,4-dihydroxy-2-butanone 4-phosphate. Functionally, catalyzes the conversion of GTP to 2,5-diamino-6-ribosylamino-4(3H)-pyrimidinone 5'-phosphate (DARP), formate and pyrophosphate. In Bacillus cereus (strain ATCC 10987 / NRS 248), this protein is Riboflavin biosynthesis protein RibBA.